A 254-amino-acid chain; its full sequence is Phosphatidylglycerol--prolipoprotein diacylglyceryl transferase (254 aa).

A run of 3 helical transmembrane segments spans residues 11-31 (LAIR…LLLA), 49-69 (FLIA…IFEF), and 84-104 (QGGL…YIYL). A 1,2-diacyl-sn-glycero-3-phospho-(1'-sn-glycerol) is bound at residue Arg-130. Transmembrane regions (helical) follow at residues 169 to 189 (PTFL…VYLL), 196 to 216 (GIVF…IEGL), and 228 to 248 (VAQL…YNII).

The protein belongs to the Lgt family.

It is found in the cell membrane. It carries out the reaction L-cysteinyl-[prolipoprotein] + a 1,2-diacyl-sn-glycero-3-phospho-(1'-sn-glycerol) = an S-1,2-diacyl-sn-glyceryl-L-cysteinyl-[prolipoprotein] + sn-glycerol 1-phosphate + H(+). It functions in the pathway protein modification; lipoprotein biosynthesis (diacylglyceryl transfer). In terms of biological role, catalyzes the transfer of the diacylglyceryl group from phosphatidylglycerol to the sulfhydryl group of the N-terminal cysteine of a prolipoprotein, the first step in the formation of mature lipoproteins. The sequence is that of Phosphatidylglycerol--prolipoprotein diacylglyceryl transferase from Clostridium botulinum (strain Loch Maree / Type A3).